A 137-amino-acid polypeptide reads, in one-letter code: Mobilization protein B (137 aa).

In terms of assembly, interacts with MobA and MobC to form the relaxosome.

Functionally, this protein is essential to promote the specific transfer of the plasmid in the presence of conjugative plasmids. The sequence is that of Mobilization protein B (mobB) from Escherichia coli.